The following is a 687-amino-acid chain: Polyphosphate kinase (687 aa).

An ATP-binding site is contributed by Asn45. 2 residues coordinate Mg(2+): Arg373 and Arg403. His433 (phosphohistidine intermediate) is an active-site residue. Residues Tyr466, Arg562, and His590 each coordinate ATP. A PLD phosphodiesterase domain is found at 585-615; sequence DRFLEHDRVYVFENKGDKLVYLSSADWMTRN.

The protein belongs to the polyphosphate kinase 1 (PPK1) family. It depends on Mg(2+) as a cofactor. In terms of processing, an intermediate of this reaction is the autophosphorylated ppk in which a phosphate is covalently linked to a histidine residue through a N-P bond.

The enzyme catalyses [phosphate](n) + ATP = [phosphate](n+1) + ADP. Functionally, catalyzes the reversible transfer of the terminal phosphate of ATP to form a long-chain polyphosphate (polyP). The polypeptide is Polyphosphate kinase (Yersinia pestis).